The sequence spans 480 residues: Protein nucleotidyltransferase YdiU (480 aa).

The ATP site is built by Gly-87, Gly-89, Arg-90, Lys-110, Asp-122, Gly-123, Arg-173, and Arg-180. Residue Asp-249 is the Proton acceptor of the active site. 2 residues coordinate Mg(2+): Asn-250 and Asp-259. Asp-259 is an ATP binding site.

This sequence belongs to the SELO family. Mg(2+) is required as a cofactor. The cofactor is Mn(2+).

The enzyme catalyses L-seryl-[protein] + ATP = 3-O-(5'-adenylyl)-L-seryl-[protein] + diphosphate. It catalyses the reaction L-threonyl-[protein] + ATP = 3-O-(5'-adenylyl)-L-threonyl-[protein] + diphosphate. It carries out the reaction L-tyrosyl-[protein] + ATP = O-(5'-adenylyl)-L-tyrosyl-[protein] + diphosphate. The catalysed reaction is L-histidyl-[protein] + UTP = N(tele)-(5'-uridylyl)-L-histidyl-[protein] + diphosphate. The enzyme catalyses L-seryl-[protein] + UTP = O-(5'-uridylyl)-L-seryl-[protein] + diphosphate. It catalyses the reaction L-tyrosyl-[protein] + UTP = O-(5'-uridylyl)-L-tyrosyl-[protein] + diphosphate. Nucleotidyltransferase involved in the post-translational modification of proteins. It can catalyze the addition of adenosine monophosphate (AMP) or uridine monophosphate (UMP) to a protein, resulting in modifications known as AMPylation and UMPylation. This chain is Protein nucleotidyltransferase YdiU, found in Anoxybacillus flavithermus (strain DSM 21510 / WK1).